The primary structure comprises 300 residues: Actin-related protein 2/3 complex subunit 2 (300 aa).

N6-acetyllysine occurs at positions 275 and 295.

It belongs to the ARPC2 family. In terms of assembly, component of the Arp2/3 complex composed of ACTR2/ARP2, ACTR3/ARP3, ARPC1B/p41-ARC, ARPC2/p34-ARC, ARPC3/p21-ARC, ARPC4/p20-ARC and ARPC5/p16-ARC. Interacts with SHANK3; the interaction probably mediates the association of SHANK3 with the Arp2/3 complex.

It is found in the cytoplasm. The protein localises to the cytoskeleton. The protein resides in the cell projection. It localises to the synapse. Its subcellular location is the synaptosome. It is found in the nucleus. Actin-binding component of the Arp2/3 complex, a multiprotein complex that mediates actin polymerization upon stimulation by nucleation-promoting factor (NPF). The Arp2/3 complex mediates the formation of branched actin networks in the cytoplasm, providing the force for cell motility. Seems to contact the mother actin filament. In addition to its role in the cytoplasmic cytoskeleton, the Arp2/3 complex also promotes actin polymerization in the nucleus, thereby regulating gene transcription and repair of damaged DNA. The Arp2/3 complex promotes homologous recombination (HR) repair in response to DNA damage by promoting nuclear actin polymerization, leading to drive motility of double-strand breaks (DSBs). The sequence is that of Actin-related protein 2/3 complex subunit 2 from Rattus norvegicus (Rat).